Reading from the N-terminus, the 903-residue chain is DNA-directed DNA polymerase (903 aa).

Residues 103-340 form a 3'-5'exonuclease region; it reads YDHTKIRVAN…VLQIDAKRQF (238 aa). Mg(2+)-binding residues include D114, E116, and D222. The interval 248-264 is beta hairpin; that stretch reads TRVKVIENMYGSREIIT. Positions 327, 411, and 412 each coordinate Mg(2+). Positions 380-903 are polymerase; that stretch reads IPQGRSHPVQ…KASLFDMFDF (524 aa). Substrate is bound by residues 414–416, R482, and K560; that span reads SLY. D623 is a binding site for Mg(2+). Residues 705-708 are binding of DNA in B-conformation; the sequence is KKRY. Positions 897-903 are interaction with the polymerase clamp; sequence LFDMFDF.

Belongs to the DNA polymerase type-B family. In terms of assembly, part of the replicase complex that includes the DNA polymerase, the polymerase clamp, the clamp loader complex, the single-stranded DNA binding protein, and the primase/helicase. Interacts with the polymerase clamp; this interaction constitutes the polymerase holoenzyme. Mg(2+) is required as a cofactor.

The enzyme catalyses DNA(n) + a 2'-deoxyribonucleoside 5'-triphosphate = DNA(n+1) + diphosphate. Its function is as follows. Replicates the viral genomic DNA. This polymerase possesses two enzymatic activities: DNA synthesis (polymerase) and an exonucleolytic activity that degrades single-stranded DNA in the 3'- to 5'-direction for proofreading purpose. The chain is DNA-directed DNA polymerase (43) from Escherichia coli (Bacteriophage RB69).